A 135-amino-acid polypeptide reads, in one-letter code: Small ribosomal subunit protein bS16m/bS16c (135 aa).

The N-terminal 7 residues, Met1–Leu7, are a transit peptide targeting the chloroplast and mitochondrion. A disordered region spans residues Pro87 to Ala135. Over residues Gln124–Ala135 the composition is skewed to basic and acidic residues.

The protein belongs to the bacterial ribosomal protein bS16 family. Component of the mitochondrial ribosome small subunit. Expressed at low levels in flowers, and, to a lower extent, in leaves, stems and roots.

It localises to the mitochondrion. The protein localises to the plastid. It is found in the chloroplast. The sequence is that of Small ribosomal subunit protein bS16m/bS16c from Arabidopsis thaliana (Mouse-ear cress).